Consider the following 160-residue polypeptide: Transcription elongation factor GreA (160 aa).

Residues 49 to 75 are a coiled coil; the sequence is SEYDEAKNDQAFTEGRIIQLENMLKNA.

Belongs to the GreA/GreB family.

Necessary for efficient RNA polymerase transcription elongation past template-encoded arresting sites. The arresting sites in DNA have the property of trapping a certain fraction of elongating RNA polymerases that pass through, resulting in locked ternary complexes. Cleavage of the nascent transcript by cleavage factors such as GreA or GreB allows the resumption of elongation from the new 3'terminus. GreA releases sequences of 2 to 3 nucleotides. The polypeptide is Transcription elongation factor GreA (Clostridium beijerinckii (strain ATCC 51743 / NCIMB 8052) (Clostridium acetobutylicum)).